The chain runs to 129 residues: Large ribosomal subunit protein uL22 (129 aa).

It belongs to the universal ribosomal protein uL22 family. Part of the 50S ribosomal subunit.

This protein binds specifically to 23S rRNA; its binding is stimulated by other ribosomal proteins, e.g. L4, L17, and L20. It is important during the early stages of 50S assembly. It makes multiple contacts with different domains of the 23S rRNA in the assembled 50S subunit and ribosome. In terms of biological role, the globular domain of the protein is located near the polypeptide exit tunnel on the outside of the subunit, while an extended beta-hairpin is found that lines the wall of the exit tunnel in the center of the 70S ribosome. The polypeptide is Large ribosomal subunit protein uL22 (Sinorhizobium medicae (strain WSM419) (Ensifer medicae)).